Reading from the N-terminus, the 492-residue chain is Ammonium transporter MEP1 (492 aa).

Residues 1–18 are Extracellular-facing; that stretch reads MESRTTGPLTTETYDGPT. A helical membrane pass occupies residues 19–39; that stretch reads VAFMILGAALVFFMVPGLGFL. Residues 40–49 lie on the Cytoplasmic side of the membrane; the sequence is YSGLARRKSA. A helical membrane pass occupies residues 50–70; sequence LALIWVVLMATLVGILQWYFW. The Extracellular portion of the chain corresponds to 71 to 109; it reads GYSLAFSKSAPNNKFIGNLDSFGFRNVYGKKFDEDAYPE. The chain crosses the membrane as a helical span at residues 110-130; sequence LAYATFQMMFSCVNLSIIAGA. Topologically, residues 131–140 are cytoplasmic; that stretch reads TAERGRLLPH. Residues 141–161 traverse the membrane as a helical segment; the sequence is MVFLFILATIGYCPVTYWIWS. Residues 162-174 lie on the Extracellular side of the membrane; that stretch reads PGGWAYQWGVLDW. A helical membrane pass occupies residues 175–195; sequence AGGGNIEILSAVSGFVYSWFL. At 196-210 the chain is on the cytoplasmic side; the sequence is GKRNEKLLINFRPHN. A helical transmembrane segment spans residues 211-231; that stretch reads VSLVTLGTSILWFGWLLFNSA. The Extracellular portion of the chain corresponds to 232–240; that stretch reads SSLSPNLRS. A helical membrane pass occupies residues 241–261; the sequence is VYAFMNTCLSAITGGMTWCLL. The Cytoplasmic segment spans residues 262–268; it reads DYRSEKK. Residues 269-289 form a helical membrane-spanning segment; the sequence is WSTVGLCSGIISGLVAATPSS. Gly290 is a topological domain (extracellular). The helical transmembrane segment at 291 to 311 threads the bilayer; the sequence is CITLYGSLIQGIVAGVVCNFA. Residues 312-331 lie on the Cytoplasmic side of the membrane; it reads TKLKYYAKVDDAMDILAEHG. The helical transmembrane segment at 332–352 threads the bilayer; it reads VAGVIGLIFNALFGADWVIGM. Residues 353 to 373 lie on the Extracellular side of the membrane; the sequence is DGTTEHEGGWVTHNYKQMYKQ. A helical membrane pass occupies residues 374 to 394; the sequence is IAYIAASIGYTAAVTAIICFV. Over 395-492 the chain is Cytoplasmic; that stretch reads LGYIPGMRLR…PIHQEDPANR (98 aa). Residues Ser442 and Ser445 each carry the phosphoserine modification. The interval 455-492 is disordered; the sequence is HLAAERSSSGTNSSSDGNGEMIQSEKILPIHQEDPANR. The span at 461–473 shows a compositional bias: low complexity; it reads SSSGTNSSSDGNG.

Belongs to the ammonia transporter channel (TC 1.A.11.2) family.

It localises to the membrane. Its function is as follows. Transporter for ammonium (both charged and uncharged NH3 and NH4) to use as a nitrogen source. Can also transport methylamine. The affinity of MEP1 is about twenty times lower than that of MEP2. MEP3 has the lowest affinity. The chain is Ammonium transporter MEP1 (MEP1) from Saccharomyces cerevisiae (strain ATCC 204508 / S288c) (Baker's yeast).